Consider the following 207-residue polypeptide: High frequency lysogenization protein HflD homolog (207 aa).

This sequence belongs to the HflD family.

The protein localises to the cytoplasm. The protein resides in the cell inner membrane. In Cellvibrio japonicus (strain Ueda107) (Pseudomonas fluorescens subsp. cellulosa), this protein is High frequency lysogenization protein HflD homolog.